The following is a 253-amino-acid chain: REF/SRPP-like protein Os05g0151300/LOC_Os05g05940 (253 aa).

The segment at methionine 1–methionine 26 is disordered. The segment covering arginine 13–methionine 26 has biased composition (basic and acidic residues).

Belongs to the REF/SRPP family.

The chain is REF/SRPP-like protein Os05g0151300/LOC_Os05g05940 from Oryza sativa subsp. japonica (Rice).